Reading from the N-terminus, the 171-residue chain is NADH-quinone oxidoreductase subunit B 1 (171 aa).

Positions 44, 45, 110, and 139 each coordinate [4Fe-4S] cluster.

Belongs to the complex I 20 kDa subunit family. As to quaternary structure, NDH-1 is composed of 14 different subunits. Subunits NuoB, C, D, E, F, and G constitute the peripheral sector of the complex. The cofactor is [4Fe-4S] cluster.

It localises to the cell inner membrane. The catalysed reaction is a quinone + NADH + 5 H(+)(in) = a quinol + NAD(+) + 4 H(+)(out). Functionally, NDH-1 shuttles electrons from NADH, via FMN and iron-sulfur (Fe-S) centers, to quinones in the respiratory chain. The immediate electron acceptor for the enzyme in this species is believed to be ubiquinone. Couples the redox reaction to proton translocation (for every two electrons transferred, four hydrogen ions are translocated across the cytoplasmic membrane), and thus conserves the redox energy in a proton gradient. In Opitutus terrae (strain DSM 11246 / JCM 15787 / PB90-1), this protein is NADH-quinone oxidoreductase subunit B 1.